A 417-amino-acid polypeptide reads, in one-letter code: MDKLIIKGGKKLIGEVSVSGSKNAALPIFVSTILAPGLNEIRNVPFLRDINTTIKVLESLGAVVEGNGNIVRIDTTHVNNVEATYDLVKTMRASVLVLGPLLARHGRARVSLPGGCAIGARPINLHLKGLAALGADIRLEHGYVEAKAKKLKGARINFDISTVGGTEQLMMAAALAKGETVLENAAREPEIIDLAEILIKMGAKIDGAGTDTIRITGVKELAPVAHDVMPDRIEAGTFMVAAAITGGDIKIRNMKLEHLDALVFKLQDAGVEITNRDNVVRVKGPRRPKAVNIKTRPYPGFPTDMQAQFMALMCVADGASVISENIFENRFMHVSELLRFGADITVEGSTATVKGVKKLSGAPVMATDLRASASLILAGLAADNTTEISRIYHLDRGYESIEKKLAGLGADIQRVKE.

Position 22–23 (22–23) interacts with phosphoenolpyruvate; sequence KN. Arginine 92 provides a ligand contact to UDP-N-acetyl-alpha-D-glucosamine. Cysteine 116 (proton donor) is an active-site residue. 2-(S-cysteinyl)pyruvic acid O-phosphothioketal is present on cysteine 116. Residues aspartate 304 and isoleucine 326 each coordinate UDP-N-acetyl-alpha-D-glucosamine.

Belongs to the EPSP synthase family. MurA subfamily.

The protein localises to the cytoplasm. The catalysed reaction is phosphoenolpyruvate + UDP-N-acetyl-alpha-D-glucosamine = UDP-N-acetyl-3-O-(1-carboxyvinyl)-alpha-D-glucosamine + phosphate. It functions in the pathway cell wall biogenesis; peptidoglycan biosynthesis. Its function is as follows. Cell wall formation. Adds enolpyruvyl to UDP-N-acetylglucosamine. This chain is UDP-N-acetylglucosamine 1-carboxyvinyltransferase, found in Geobacter sulfurreducens (strain ATCC 51573 / DSM 12127 / PCA).